The following is a 300-amino-acid chain: Tissue factor pathway inhibitor (300 aa).

The signal sequence occupies residues 1 to 24 (MKKEHIFWTSICLLLGLVPAPVSS). BPTI/Kunitz inhibitor domains follow at residues 50-100 (CAMK…KEKC) and 121-171 (CFLE…KNTC). 6 cysteine pairs are disulfide-bonded: cysteine 50–cysteine 100, cysteine 59–cysteine 83, cysteine 75–cysteine 96, cysteine 121–cysteine 171, cysteine 130–cysteine 154, and cysteine 146–cysteine 167. An N-linked (GlcNAc...) asparagine glycan is attached at asparagine 141. Asparagine 191 carries an N-linked (GlcNAc...) asparagine glycan. A BPTI/Kunitz inhibitor 3 domain is found at 213 to 263 (CLPPADRGLCQANEIRFFYNAIIGKCRPFKYSGCGGNENNFTSKKACITAC). 3 disulfide bridges follow: cysteine 213–cysteine 263, cysteine 222–cysteine 246, and cysteine 238–cysteine 259. N-linked (GlcNAc...) asparagine glycosylation occurs at asparagine 252.

It localises to the secreted. Functionally, inhibits factor X (X(a)) directly and, in a Xa-dependent way, inhibits VIIa/tissue factor activity, presumably by forming a quaternary Xa/LACI/VIIa/TF complex. It possesses an antithrombotic action and also the ability to associate with lipoproteins in plasma. This is Tissue factor pathway inhibitor (TFPI) from Oryctolagus cuniculus (Rabbit).